Here is a 479-residue protein sequence, read N- to C-terminus: Nuclear envelope integral membrane protein 2 (479 aa).

The first 23 residues, 1 to 23 (MEKLAAFILVLTLLCAYWQSAEG), serve as a signal peptide directing secretion. A glycan (N-linked (GlcNAc...) asparagine) is linked at Asn-69. The next 5 membrane-spanning stretches (helical) occupy residues 172 to 192 (LFFY…FLTL), 203 to 223 (LFLV…QRVL), 233 to 253 (HWME…AVCY), 276 to 296 (IVLL…VAVL), and 301 to 321 (ILPL…SFLA). Asn-414 carries N-linked (GlcNAc...) asparagine glycosylation. Positions 414 to 479 (NSSSSDTQSH…PLDPEDQDFF (66 aa)) are disordered. Residues 438-449 (NSPPVLNNLPSP) are compositionally biased toward low complexity. Residues 450-470 (TIYPPTICPYPPVTYTPQPEP) are compositionally biased toward pro residues.

The protein belongs to the NEMP family.

The protein localises to the nucleus inner membrane. In terms of biological role, contributes to nuclear envelope stiffness in germ cells. Involved in male and female fertility. In Danio rerio (Zebrafish), this protein is Nuclear envelope integral membrane protein 2.